Reading from the N-terminus, the 504-residue chain is MESLLAAGAGGIGVAAAAVGGFIAAATLAVAPPKNRRNPPPAVPGLPIIGNLHQLKEKKPHQTFTKWAEIYGPIYTIRTGASSVVVLNSTEVAKEAMVAKFSSISTRKLSKALTVLSHDKSMVATSDSGDFHKMGKRYIMLSMLGTSAQKQFRDTRDMIINNMLSTFHQLVKDDPHAPLIFRDVFKDELFRLSMIQSLGEDVSSVYVDEFGRDISKEEIYNATVTDMMMCAIEVDWRDFFPYLSWVPNKSFETRVFTTESRRTAVMRALIKQQKERIVRGEARTCYLDFLLAENTLTDEQLMMLVWEALIEAADTTLVTTEWAMYELAKNPDKQERLYQEIREVCGDEAVTEEHLPWLPYLNAVFQETLRRHSPVPLIPPRFVNEDTMLAGYDVPAGTEMVINLYGCNMNKKEWESPEEWAPERFAGGRFKVADMYKTMAFGAGRRVCAGSLQATHIACAAIARFVQEFGWRLREGDEEKVDTVQLTAYKLHPLHVHLTPRGRM.

The chain crosses the membrane as a helical span at residues 3-23 (SLLAAGAGGIGVAAAAVGGFI). Cysteine 448 contributes to the heme binding site.

It belongs to the cytochrome P450 family. It depends on heme as a cofactor. In terms of tissue distribution, expressed in leaf blades.

Its subcellular location is the membrane. In terms of biological role, may hydroxylate diterpenes. This Oryza sativa subsp. japonica (Rice) protein is Ent-kaurene oxidase-like 3.